Here is a 272-residue protein sequence, read N- to C-terminus: Cell division protein FtsQ (272 aa).

At 1-43 (MEYNPPNTRERIAARRQRLRQPSSEPAIPGWRRRFIDGLQSGR) the chain is on the cytoplasmic side. The chain crosses the membrane as a helical span at residues 44–64 (IVSGAVFVVSCLALFYVLFSS). Residues 65–272 (QFRVQTVEVV…FYQNRTDGRS (208 aa)) lie on the Extracellular side of the membrane. The POTRA domain maps to 66–133 (FRVQTVEVVG…DRARIVIVER (68 aa)).

The protein belongs to the FtsQ/DivIB family. FtsQ subfamily.

It localises to the cell membrane. Its function is as follows. Essential cell division protein. This is Cell division protein FtsQ from Chloroflexus aggregans (strain MD-66 / DSM 9485).